Reading from the N-terminus, the 388-residue chain is 1-deoxy-D-xylulose 5-phosphate reductoisomerase (388 aa).

NADPH contacts are provided by threonine 10, glycine 11, serine 12, isoleucine 13, lysine 37, asparagine 38, and asparagine 123. 1-deoxy-D-xylulose 5-phosphate is bound at residue lysine 124. Glutamate 125 provides a ligand contact to NADPH. A Mn(2+)-binding site is contributed by aspartate 149. 1-deoxy-D-xylulose 5-phosphate-binding residues include serine 150, glutamate 151, serine 175, and histidine 198. Glutamate 151 serves as a coordination point for Mn(2+). Glycine 204 serves as a coordination point for NADPH. Residues serine 211, asparagine 216, lysine 217, and glutamate 220 each coordinate 1-deoxy-D-xylulose 5-phosphate. Glutamate 220 serves as a coordination point for Mn(2+).

It belongs to the DXR family. The cofactor is Mg(2+). It depends on Mn(2+) as a cofactor.

The enzyme catalyses 2-C-methyl-D-erythritol 4-phosphate + NADP(+) = 1-deoxy-D-xylulose 5-phosphate + NADPH + H(+). The protein operates within isoprenoid biosynthesis; isopentenyl diphosphate biosynthesis via DXP pathway; isopentenyl diphosphate from 1-deoxy-D-xylulose 5-phosphate: step 1/6. Functionally, catalyzes the NADPH-dependent rearrangement and reduction of 1-deoxy-D-xylulose-5-phosphate (DXP) to 2-C-methyl-D-erythritol 4-phosphate (MEP). The polypeptide is 1-deoxy-D-xylulose 5-phosphate reductoisomerase (Pelagibacter ubique (strain HTCC1062)).